Here is a 158-residue protein sequence, read N- to C-terminus: SsrA-binding protein (158 aa).

A compositionally biased stretch (basic and acidic residues) spans 133-152 (KRQTLREQQDNREAQREMRE). A disordered region spans residues 133–158 (KRQTLREQQDNREAQREMRERNRRRG).

This sequence belongs to the SmpB family.

It localises to the cytoplasm. Required for rescue of stalled ribosomes mediated by trans-translation. Binds to transfer-messenger RNA (tmRNA), required for stable association of tmRNA with ribosomes. tmRNA and SmpB together mimic tRNA shape, replacing the anticodon stem-loop with SmpB. tmRNA is encoded by the ssrA gene; the 2 termini fold to resemble tRNA(Ala) and it encodes a 'tag peptide', a short internal open reading frame. During trans-translation Ala-aminoacylated tmRNA acts like a tRNA, entering the A-site of stalled ribosomes, displacing the stalled mRNA. The ribosome then switches to translate the ORF on the tmRNA; the nascent peptide is terminated with the 'tag peptide' encoded by the tmRNA and targeted for degradation. The ribosome is freed to recommence translation, which seems to be the essential function of trans-translation. This chain is SsrA-binding protein, found in Pseudarthrobacter chlorophenolicus (strain ATCC 700700 / DSM 12829 / CIP 107037 / JCM 12360 / KCTC 9906 / NCIMB 13794 / A6) (Arthrobacter chlorophenolicus).